The sequence spans 428 residues: MGIKGLTKVLAEHAPRAAVQRRVEDYRGRVIAVDASLSIYQFLIVVGRKGSELLTNEAGEVTRQETSLALPVSDHCIPAYLTFHLCELCSHLQGMLNRTVRMLEAGIKPVFVFDGEPPEMKKKELAKRSLKRDDATKDLNRAIEIGDEDAVEKFSKRTVKVTRKHNDDCKRLLRLMGVPVVEAPGEAEAQCAALCENHQVYAVASEDMDSLTFGARRFLRHLTDLGYKKSPVTEFDVSKVLEELGLTMDQFIDLCILSGCDYCENIKGIGGQRALKLIRQHGCIEEVLQNLNQTRFSVPEDWPYQEVRTLFKEPNVSAGISDFTWTSPDTEGLMGFLSTENSFSPDRVTKAVEKIKAARDRYSPGRLKHLTPVASLPGTHTGKEPKCILGSPGQSLKLINYCSSSSTSNAGYRYTVDLSLLAFKGLIS.

An N-domain region spans residues 1 to 132 (MGIKGLTKVL…KELAKRSLKR (132 aa)). A Mg(2+)-binding site is contributed by aspartate 34. Arginine 98 contacts DNA. Mg(2+) is bound by residues aspartate 114, glutamate 186, glutamate 188, aspartate 207, and aspartate 209. Residues 150–281 (AVEKFSKRTV…QRALKLIRQH (132 aa)) form an I-domain region. Residue glutamate 186 coordinates DNA. The DNA site is built by glycine 259 and aspartate 261. Aspartate 261 contacts Mg(2+).

Belongs to the XPG/RAD2 endonuclease family. FEN1 subfamily. In terms of assembly, interacts with PCNA. Three molecules of FEN1 bind to one PCNA trimer with each molecule binding to one PCNA monomer. PCNA stimulates the nuclease activity without altering cleavage specificity. Mg(2+) is required as a cofactor. Phosphorylated. Phosphorylation upon DNA damage induces relocalization to the nuclear plasma.

It localises to the nucleus. Its subcellular location is the nucleolus. The protein localises to the nucleoplasm. It is found in the mitochondrion. Structure-specific nuclease with 5'-flap endonuclease and 5'-3' exonuclease activities involved in DNA replication and repair. During DNA replication, cleaves the 5'-overhanging flap structure that is generated by displacement synthesis when DNA polymerase encounters the 5'-end of a downstream Okazaki fragment. It enters the flap from the 5'-end and then tracks to cleave the flap base, leaving a nick for ligation. Also involved in the long patch base excision repair (LP-BER) pathway, by cleaving within the apurinic/apyrimidinic (AP) site-terminated flap. Acts as a genome stabilization factor that prevents flaps from equilibrating into structures that lead to duplications and deletions. Also possesses 5'-3' exonuclease activity on nicked or gapped double-stranded DNA, and exhibits RNase H activity. Also involved in replication and repair of rDNA and in repairing mitochondrial DNA. This Sorghum bicolor (Sorghum) protein is Flap endonuclease 1-B.